Here is a 454-residue protein sequence, read N- to C-terminus: tRNA modification GTPase MnmE (454 aa).

Residues arginine 23, glutamate 80, and lysine 120 each contribute to the (6S)-5-formyl-5,6,7,8-tetrahydrofolate site. In terms of domain architecture, TrmE-type G spans 216-377; the sequence is GMKVVIAGRP…LRNHLKQSMG (162 aa). A K(+)-binding site is contributed by asparagine 226. Residues 226–231, 245–251, 270–273, 335–338, and 358–360 contribute to the GTP site; these read NAGKSS, TDIAGTT, DTAG, NKAD, and SAR. Serine 230 contacts Mg(2+). Positions 245, 247, and 250 each coordinate K(+). Threonine 251 provides a ligand contact to Mg(2+). Lysine 454 is a (6S)-5-formyl-5,6,7,8-tetrahydrofolate binding site.

It belongs to the TRAFAC class TrmE-Era-EngA-EngB-Septin-like GTPase superfamily. TrmE GTPase family. Homodimer. Heterotetramer of two MnmE and two MnmG subunits. It depends on K(+) as a cofactor.

Its subcellular location is the cytoplasm. Functionally, exhibits a very high intrinsic GTPase hydrolysis rate. Involved in the addition of a carboxymethylaminomethyl (cmnm) group at the wobble position (U34) of certain tRNAs, forming tRNA-cmnm(5)s(2)U34. The chain is tRNA modification GTPase MnmE from Salmonella choleraesuis (strain SC-B67).